Reading from the N-terminus, the 134-residue chain is Small ribosomal subunit protein uS11 (134 aa).

The interval 114 to 134 is disordered; the sequence is SISDVTPQPHNGCRPPKRRRV.

This sequence belongs to the universal ribosomal protein uS11 family. Part of the 30S ribosomal subunit. Interacts with proteins S7 and S18. Binds to IF-3.

Its function is as follows. Located on the platform of the 30S subunit, it bridges several disparate RNA helices of the 16S rRNA. Forms part of the Shine-Dalgarno cleft in the 70S ribosome. The protein is Small ribosomal subunit protein uS11 of Corynebacterium efficiens (strain DSM 44549 / YS-314 / AJ 12310 / JCM 11189 / NBRC 100395).